A 167-amino-acid chain; its full sequence is MINVEIIKNYDKWREHKQINKSLIKKITQNVLLRFDNFSKIKQFELSILLTNTAEILTLNKQFRNIEKATNVLSFPSNELNWQDLYSKLEFLGDSDYIHLGDIAFCYEVIYNESCEQQKNFENHFIHLLIHSILHLIGFDHQNDTEANIMENLEIEILSYFGISSPY.

3 residues coordinate Zn(2+): His-131, His-135, and His-141.

Belongs to the endoribonuclease YbeY family. Zn(2+) is required as a cofactor.

Its subcellular location is the cytoplasm. Its function is as follows. Single strand-specific metallo-endoribonuclease involved in late-stage 70S ribosome quality control and in maturation of the 3' terminus of the 16S rRNA. The protein is Endoribonuclease YbeY of Rickettsia felis (strain ATCC VR-1525 / URRWXCal2) (Rickettsia azadi).